The following is a 776-amino-acid chain: Venom dipeptidyl peptidase 4 (776 aa).

The first 19 residues, 1-19, serve as a signal peptide directing secretion; it reads MVPLRSFVLLNGLFFVLLA. 3 N-linked (GlcNAc...) asparagine glycosylation sites follow: Asn44, Asn66, and Asn329. 2 cysteine pairs are disulfide-bonded: Cys449-Cys452 and Cys462-Cys480. Residues Asn504 and Asn577 are each glycosylated (N-linked (GlcNAc...) asparagine). The active-site Charge relay system is Ser638. A disulfide bridge links Cys658 with Cys769. The N-linked (GlcNAc...) asparagine glycan is linked to Asn693. Catalysis depends on charge relay system residues Asp717 and His749.

This sequence belongs to the peptidase S9B family. DPPIV subfamily. As to expression, expressed by the venom gland.

The protein resides in the secreted. The enzyme catalyses Release of an N-terminal dipeptide, Xaa-Yaa-|-Zaa-, from a polypeptide, preferentially when Yaa is Pro, provided Zaa is neither Pro nor hydroxyproline.. Venom dipeptidyl-peptidase which removes N-terminal dipeptides sequentially from polypeptides having unsubstituted N-termini provided that the penultimate residue is proline. May process venom proteins into their active forms and/or modulate the chemotactic activity of immune cells after the insect sting. The polypeptide is Venom dipeptidyl peptidase 4 (Vespa velutina (Asian yellow-legged hornet)).